The following is a 334-amino-acid chain: Cathepsin L2 (334 aa).

The first 17 residues, 1 to 17, serve as a signal peptide directing secretion; that stretch reads MNLSLVLAAFCLGIASA. Positions 18-113 are cleaved as a propeptide — activation peptide; that stretch reads VPKFDQNLDT…KVFREPLFLD (96 aa). 2 cysteine pairs are disulfide-bonded: Cys-135–Cys-178 and Cys-169–Cys-211. Residue Cys-138 is part of the active site. N-linked (GlcNAc...) asparagine glycosylation is present at Asn-221. Cys-270 and Cys-323 are oxidised to a cystine. His-277 is a catalytic residue. Asn-292 is a glycosylation site (N-linked (GlcNAc...) asparagine). Asn-301 is a catalytic residue.

This sequence belongs to the peptidase C1 family. As to expression, predominantly expressed in the thymus and testis. Also expressed in corneal epithelium, and to a lesser extent in conjunctival epithelium and skin.

It localises to the lysosome. The catalysed reaction is The recombinant enzyme hydrolyzes proteins (serum albumin, collagen) and synthetic substrates (Z-Phe-Arg-NHMec &gt; Z-Leu-Arg-NHMec &gt; Z-Val-Arg-NHMec).. Inhibited by CST6. Functionally, cysteine protease. May have an important role in corneal physiology. The polypeptide is Cathepsin L2 (CTSV) (Homo sapiens (Human)).